Here is a 534-residue protein sequence, read N- to C-terminus: Bifunctional pantoate ligase/cytidylate kinase (534 aa).

Positions Met1–Thr302 are pantoate--beta-alanine ligase. Met48–His55 contributes to the ATP binding site. His55 (proton donor) is an active-site residue. Gln79 serves as a coordination point for (R)-pantoate. Gln79 contacts beta-alanine. Gly172–Asp175 contacts ATP. (R)-pantoate is bound at residue Gln178. ATP is bound by residues Val201 and Cys209–Arg212. The tract at residues Ile303–Trp534 is cytidylate kinase.

The protein in the N-terminal section; belongs to the pantothenate synthetase family. This sequence in the C-terminal section; belongs to the cytidylate kinase family. Type 1 subfamily.

The protein localises to the cytoplasm. The enzyme catalyses (R)-pantoate + beta-alanine + ATP = (R)-pantothenate + AMP + diphosphate + H(+). The catalysed reaction is CMP + ATP = CDP + ADP. It catalyses the reaction dCMP + ATP = dCDP + ADP. It participates in cofactor biosynthesis; (R)-pantothenate biosynthesis; (R)-pantothenate from (R)-pantoate and beta-alanine: step 1/1. Catalyzes the condensation of pantoate with beta-alanine in an ATP-dependent reaction via a pantoyl-adenylate intermediate. In terms of biological role, catalyzes the transfer of a phosphate group from ATP to either CMP or dCMP to form CDP or dCDP and ADP, respectively. The polypeptide is Bifunctional pantoate ligase/cytidylate kinase (Trichormus variabilis (strain ATCC 29413 / PCC 7937) (Anabaena variabilis)).